Consider the following 284-residue polypeptide: L-ribulose-5-phosphate 3-epimerase UlaE (284 aa).

Belongs to the L-ribulose-5-phosphate 3-epimerase family.

The catalysed reaction is L-ribulose 5-phosphate = L-xylulose 5-phosphate. It participates in cofactor degradation; L-ascorbate degradation; D-xylulose 5-phosphate from L-ascorbate: step 3/4. Its function is as follows. Catalyzes the isomerization of L-xylulose-5-phosphate to L-ribulose-5-phosphate. Is involved in the anaerobic L-ascorbate utilization. In Shigella sonnei (strain Ss046), this protein is L-ribulose-5-phosphate 3-epimerase UlaE.